The following is a 156-amino-acid chain: 6,7-dimethyl-8-ribityllumazine synthase (156 aa).

Residues Phe22, Ala57 to Glu59, and Thr81 to Ile83 each bind 5-amino-6-(D-ribitylamino)uracil. Gly86–Thr87 is a (2S)-2-hydroxy-3-oxobutyl phosphate binding site. His89 functions as the Proton donor in the catalytic mechanism. Phe114 contributes to the 5-amino-6-(D-ribitylamino)uracil binding site. (2S)-2-hydroxy-3-oxobutyl phosphate is bound at residue Arg128.

It belongs to the DMRL synthase family. Forms an icosahedral capsid composed of 60 subunits, arranged as a dodecamer of pentamers.

It carries out the reaction (2S)-2-hydroxy-3-oxobutyl phosphate + 5-amino-6-(D-ribitylamino)uracil = 6,7-dimethyl-8-(1-D-ribityl)lumazine + phosphate + 2 H2O + H(+). It functions in the pathway cofactor biosynthesis; riboflavin biosynthesis; riboflavin from 2-hydroxy-3-oxobutyl phosphate and 5-amino-6-(D-ribitylamino)uracil: step 1/2. In terms of biological role, catalyzes the formation of 6,7-dimethyl-8-ribityllumazine by condensation of 5-amino-6-(D-ribitylamino)uracil with 3,4-dihydroxy-2-butanone 4-phosphate. This is the penultimate step in the biosynthesis of riboflavin. The chain is 6,7-dimethyl-8-ribityllumazine synthase from Edwardsiella ictaluri (strain 93-146).